We begin with the raw amino-acid sequence, 437 residues long: Trigger factor (437 aa).

The PPIase FKBP-type domain maps to 161–246 (GDQVNINFVG…VNSVSEAVLP (86 aa)).

The protein belongs to the FKBP-type PPIase family. Tig subfamily.

It localises to the cytoplasm. It catalyses the reaction [protein]-peptidylproline (omega=180) = [protein]-peptidylproline (omega=0). In terms of biological role, involved in protein export. Acts as a chaperone by maintaining the newly synthesized protein in an open conformation. Functions as a peptidyl-prolyl cis-trans isomerase. This is Trigger factor from Cellvibrio japonicus (strain Ueda107) (Pseudomonas fluorescens subsp. cellulosa).